The primary structure comprises 508 residues: 2,3-bisphosphoglycerate-independent phosphoglycerate mutase (508 aa).

Residues Asp14 and Ser64 each contribute to the Mn(2+) site. Ser64 functions as the Phosphoserine intermediate in the catalytic mechanism. Residues His125, 155-156 (RD), Arg187, Arg193, 259-262 (RADR), and Lys332 each bind substrate. Residues Asp399, His403, Asp440, His441, and His459 each coordinate Mn(2+).

The protein belongs to the BPG-independent phosphoglycerate mutase family. Monomer. Mn(2+) serves as cofactor.

The enzyme catalyses (2R)-2-phosphoglycerate = (2R)-3-phosphoglycerate. Its pathway is carbohydrate degradation; glycolysis; pyruvate from D-glyceraldehyde 3-phosphate: step 3/5. Catalyzes the interconversion of 2-phosphoglycerate and 3-phosphoglycerate. The chain is 2,3-bisphosphoglycerate-independent phosphoglycerate mutase from Pseudomonas fluorescens (strain Pf0-1).